Consider the following 357-residue polypeptide: Cytoplasmic tRNA 2-thiolation protein 1 (357 aa).

The segment at 314–348 (GVSRTRGRRGEKAGLHPDVGRGGGGGSSGPAEVAS) is disordered. The segment covering 321–332 (RRGEKAGLHPDV) has biased composition (basic and acidic residues).

It belongs to the TtcA family. CTU1/NCS6/ATPBD3 subfamily.

The protein localises to the cytoplasm. Its pathway is tRNA modification; 5-methoxycarbonylmethyl-2-thiouridine-tRNA biosynthesis. Functionally, plays a central role in 2-thiolation of mcm(5)S(2)U at tRNA wobble positions of tRNA(Lys), tRNA(Glu) and tRNA(Gln). Directly binds tRNAs and probably acts by catalyzing adenylation of tRNAs, an intermediate required for 2-thiolation. It is unclear whether it acts as a sulfurtransferase that transfers sulfur from thiocarboxylated URM1 onto the uridine of tRNAs at wobble position. In Chlamydomonas reinhardtii (Chlamydomonas smithii), this protein is Cytoplasmic tRNA 2-thiolation protein 1.